Here is a 129-residue protein sequence, read N- to C-terminus: Follitropin subunit beta (129 aa).

The N-terminal stretch at 1-20 (MKTAQFYIFFFCWKAIWCNG) is a signal peptide. 6 disulfide bridges follow: C21–C69, C35–C84, C38–C122, C46–C100, C50–C102, and C105–C112. 2 N-linked (GlcNAc...) asparagine glycosylation sites follow: N25 and N42.

This sequence belongs to the glycoprotein hormones subunit beta family. As to quaternary structure, heterodimer. The active follitropin is a heterodimer composed of an alpha chain/CGA shared with other hormones and a unique beta chain/FSHB shown here.

Its subcellular location is the secreted. Together with the alpha chain CGA constitutes follitropin, the follicle-stimulating hormone, and provides its biological specificity to the hormone heterodimer. Binds FSHR, a G protein-coupled receptor, on target cells to activate downstream signaling pathways. Follitropin is involved in follicle development and spermatogenesis in reproductive organs. This is Follitropin subunit beta (FSHB) from Monodelphis domestica (Gray short-tailed opossum).